The chain runs to 410 residues: Aspartate aminotransferase (410 aa).

L-aspartate contacts are provided by Gly-47, Trp-135, and Asn-185. The residue at position 249 (Lys-249) is an N6-(pyridoxal phosphate)lysine. Position 385 (Arg-385) interacts with L-aspartate.

The protein belongs to the class-I pyridoxal-phosphate-dependent aminotransferase family. In terms of assembly, homodimer. The cofactor is pyridoxal 5'-phosphate.

It localises to the cytoplasm. It catalyses the reaction L-aspartate + 2-oxoglutarate = oxaloacetate + L-glutamate. Functionally, catalyzes the reversible conversion of aspartate and 2-oxoglutarate to glutamate and oxaloacetate. This chain is Aspartate aminotransferase, found in Rhizobium meliloti (Ensifer meliloti).